The sequence spans 177 residues: T-cell receptor beta chain C region (177 aa).

The segment at 1–150 (EDLANVSAPQ…GVLSATVLYE (150 aa)) is c region. N-linked (GlcNAc...) asparagine glycans are attached at residues Asn-5 and Asn-22. Cys-31 and Cys-96 are joined by a disulfide. Residues 146–168 (TVLYEILLGKATLYAVLVSALVL) form a helical membrane-spanning segment. Residues 169–177 (MAMVKRKDS) are Cytoplasmic-facing.

It is found in the membrane. This chain is T-cell receptor beta chain C region, found in Oryctolagus cuniculus (Rabbit).